The sequence spans 358 residues: Ion-translocating oxidoreductase complex subunit D (358 aa).

The next 4 membrane-spanning stretches (helical) occupy residues 19 to 39, 41 to 61, 79 to 99, and 125 to 145; these read IMLWVILAMMPAFFTQIYYFG, GVLLQSALAIGTAIIAEFIAI, LTALILAMAIPPYAPYWVIII, and IGYVILLISFPLQMTTWMPPI. Thr186 carries the post-translational modification FMN phosphoryl threonine. Helical transmembrane passes span 220-240, 248-268, 271-291, 297-317, and 321-341; these read FAQGWWQINVAFLAGGIFLIL, IPVAMLVTFFCLATATAFTGF, LSAISQLVSGAMMFGAFFIAT, SITPRGKIIFGALVGLFVYLI, and GNYPDGVAFAILLSNICVPLI.

It belongs to the NqrB/RnfD family. As to quaternary structure, the complex is composed of six subunits: RnfA, RnfB, RnfC, RnfD, RnfE and RnfG. Requires FMN as cofactor.

The protein localises to the cell inner membrane. Part of a membrane-bound complex that couples electron transfer with translocation of ions across the membrane. This chain is Ion-translocating oxidoreductase complex subunit D, found in Haemophilus influenzae (strain PittEE).